The sequence spans 926 residues: Tyrosine-protein phosphatase non-receptor type 4 (926 aa).

Positions 29 to 312 (VVCNILLLDN…EHHTFFRLDR (284 aa)) constitute an FERM domain. 3 disordered regions span residues 379–412 (SDDR…TRVR), 429–474 (SEDF…KKNS), and 492–511 (NESF…GGIP). Polar residues-rich tracts occupy residues 398–408 (NHRNSSFTQEA) and 432–455 (FVSQ…PSQE). Position 474 is a phosphoserine (Ser474). The PDZ domain occupies 517-589 (LIKMKPDENG…DQVVLFIKAS (73 aa)). A Tyrosine-protein phosphatase domain is found at 655-911 (VLAQFDQLYR…RFVCEAILKV (257 aa)). Substrate-binding positions include Asp820, 852 to 858 (CSAGIGR), and Gln896. Catalysis depends on Cys852, which acts as the Phosphocysteine intermediate.

This sequence belongs to the protein-tyrosine phosphatase family. Non-receptor class subfamily. As to expression, highly expressed in testis. Specifically expressed in spermatocytes and spermatids within seminiferous tubules (at protein level).

The protein localises to the cell membrane. It localises to the cytoplasm. It is found in the cytoskeleton. It carries out the reaction O-phospho-L-tyrosyl-[protein] + H2O = L-tyrosyl-[protein] + phosphate. Functionally, phosphatase that plays a role in immunity, learning, synaptic plasticity or cell homeostasis. Regulates neuronal cell homeostasis by protecting neurons against apoptosis. Negatively regulates TLR4-induced interferon beta production by dephosphorylating adapter TICAM2 and inhibiting subsequent TRAM-TRIF interaction. Dephosphorylates also the immunoreceptor tyrosine-based activation motifs/ITAMs of the TCR zeta subunit and thereby negatively regulates TCR-mediated signaling pathway. May act at junctions between the membrane and the cytoskeleton. In Mus musculus (Mouse), this protein is Tyrosine-protein phosphatase non-receptor type 4 (Ptpn4).